A 199-amino-acid polypeptide reads, in one-letter code: Extracellular superoxide dismutase [Cu-Zn] (199 aa).

An N-terminal signal peptide occupies residues 1–20 (MMIASFAIFLSHIIFITYAT). Residues N33, N60, and N70 are each glycosylated (N-linked (GlcNAc...) asparagine). Cu cation contacts are provided by H89, H91, and H106. C100 and C192 are disulfide-bonded. H106 lines the Zn(2+) pocket. N111 carries N-linked (GlcNAc...) asparagine glycosylation. Zn(2+) contacts are provided by H114, H123, and D126. Residue H163 participates in Cu cation binding.

The protein belongs to the Cu-Zn superoxide dismutase family. In terms of assembly, homodimer. Cu cation is required as a cofactor. Requires Zn(2+) as cofactor.

The protein localises to the secreted. Its subcellular location is the extracellular space. The catalysed reaction is 2 superoxide + 2 H(+) = H2O2 + O2. Its function is as follows. Protect the extracellular space from toxic effect of reactive oxygen intermediates by converting superoxide radicals into hydrogen peroxide and oxygen. May act in the parasite defense by neutralizing superoxide generated by activated leukocytes, thus acting as both an antioxidant and an anti-inflammatory factor. The polypeptide is Extracellular superoxide dismutase [Cu-Zn] (Brugia pahangi (Filarial nematode worm)).